We begin with the raw amino-acid sequence, 346 residues long: Dihydroorotase (346 aa).

2 residues coordinate Zn(2+): H13 and H15. Substrate is bound by residues 15–17 (HLR) and N41. Zn(2+) is bound by residues K99, H136, and H174. K99 is modified (N6-carboxylysine). A substrate-binding site is contributed by H136. Substrate is bound at residue L219. A Zn(2+)-binding site is contributed by D247. The active site involves D247. Substrate is bound by residues H251 and A263.

It belongs to the metallo-dependent hydrolases superfamily. DHOase family. Class II DHOase subfamily. Homodimer. It depends on Zn(2+) as a cofactor.

The enzyme catalyses (S)-dihydroorotate + H2O = N-carbamoyl-L-aspartate + H(+). It functions in the pathway pyrimidine metabolism; UMP biosynthesis via de novo pathway; (S)-dihydroorotate from bicarbonate: step 3/3. In terms of biological role, catalyzes the reversible cyclization of carbamoyl aspartate to dihydroorotate. The polypeptide is Dihydroorotase (Chelativorans sp. (strain BNC1)).